An 845-amino-acid chain; its full sequence is Tyrosine-protein phosphatase corkscrew (845 aa).

SH2 domains follow at residues 6-101 (WFHP…KQPL) and 111-205 (WFHG…RQPF). Positions 227-645 (FWEEFESLQQ…KFVYYAVQHY (419 aa)) constitute a Tyrosine-protein phosphatase domain. Residues 289–444 (IRLPTDGDLY…REREREMFKT (156 aa)) are PTPase insert (Cys/Ser-rich). Positions 362–402 (SKHKRSESSASSSPSSGSGSGPGSSGTSGVSSVNGPGTPTN) are disordered. Low complexity-rich tracts occupy residues 369-378 (SSASSSPSSG) and 388-400 (TSGV…PGTP). Ser-419 carries the post-translational modification Phosphoserine. Substrate-binding positions include Asp-545, 583-589 (CSAGIGR), and Gln-630. Residue Cys-583 is the Phosphocysteine intermediate of the active site. A disordered region spans residues 793 to 824 (DSLKQQQQREEQAPAGAGKMQQPAPPLRPRPG).

Belongs to the protein-tyrosine phosphatase family. Non-receptor class subfamily. Interacts with drpr isoform A. Expressed uniformly throughout all tissues during embryogenesis.

The protein resides in the cytoplasm. The catalysed reaction is O-phospho-L-tyrosyl-[protein] + H2O = L-tyrosyl-[protein] + phosphate. Functionally, required in all receptor tyrosine kinase signaling pathways. Functions downstream of the receptor tyrosine kinase torso, acting in concert with D-Raf via tailless. Also functions downstream of Egfr (epidermal growth factor receptor) and btl (fibroblast growth factor receptor). The SH2 domain suggests that csw effects its role by mediating heteromeric protein interactions. Maternally required for normal determination of cell fates at the termini of the embryo. Required for cell fate specification of the ventral ectoderm, in the developing embryonic CNS and for embryonic tracheal cell migration. Functions during imaginal development for proper formation of adult structures such as eyes, aristae, L5 wing vein and the tarsal claw. Dephosphorylates drpr isoform A which is required for the inhibition by drpr isoform A of glial cell engulfment of axonal debris produced following axonal injury. The polypeptide is Tyrosine-protein phosphatase corkscrew (csw) (Drosophila melanogaster (Fruit fly)).